The following is a 195-amino-acid chain: ATP-dependent Clp protease proteolytic subunit (195 aa).

The active-site Nucleophile is Ser98. His123 is a catalytic residue.

Belongs to the peptidase S14 family. In terms of assembly, fourteen ClpP subunits assemble into 2 heptameric rings which stack back to back to give a disk-like structure with a central cavity, resembling the structure of eukaryotic proteasomes.

Its subcellular location is the cytoplasm. The enzyme catalyses Hydrolysis of proteins to small peptides in the presence of ATP and magnesium. alpha-casein is the usual test substrate. In the absence of ATP, only oligopeptides shorter than five residues are hydrolyzed (such as succinyl-Leu-Tyr-|-NHMec, and Leu-Tyr-Leu-|-Tyr-Trp, in which cleavage of the -Tyr-|-Leu- and -Tyr-|-Trp bonds also occurs).. Cleaves peptides in various proteins in a process that requires ATP hydrolysis. Has a chymotrypsin-like activity. Plays a major role in the degradation of misfolded proteins. In Wolinella succinogenes (strain ATCC 29543 / DSM 1740 / CCUG 13145 / JCM 31913 / LMG 7466 / NCTC 11488 / FDC 602W) (Vibrio succinogenes), this protein is ATP-dependent Clp protease proteolytic subunit.